We begin with the raw amino-acid sequence, 456 residues long: NADH oxidase (456 aa).

Asparagine 10 serves as a coordination point for FAD. Histidine 11 acts as the Proton acceptor in catalysis. FAD contacts are provided by alanine 12, aspartate 34, glutamine 35, cysteine 44, valine 81, alanine 110, serine 113, lysine 143, and tyrosine 170. The active-site Redox-active is cysteine 44. The residue at position 44 (cysteine 44) is a Cysteine sulfinic acid (-SO2H). Isoleucine 171, aspartate 190, tyrosine 199, and glycine 254 together coordinate NAD(+). Residue aspartate 292 coordinates FAD. Alanine 308 provides a ligand contact to NAD(+). Residues leucine 309, alanine 310, and serine 311 each contribute to the FAD site. Glycine 339 contacts NAD(+). Phenylalanine 436 is an FAD binding site.

Requires FAD as cofactor.

The catalysed reaction is 2 NADH + O2 + 2 H(+) = 2 NAD(+) + 2 H2O. Its function is as follows. Catalyzes the four-electron reduction of molecular oxygen to water. In Streptococcus pyogenes serotype M6 (strain ATCC BAA-946 / MGAS10394), this protein is NADH oxidase.